The primary structure comprises 212 residues: Claudin-7-A (212 aa).

Residues 1–7 lie on the Cytoplasmic side of the membrane; it reads MANSGVQ. The helical transmembrane segment at 8–28 threads the bilayer; sequence LLGFGLSLIGIIGLIVGTILP. Residues 29–81 lie on the Extracellular side of the membrane; the sequence is QWKMSAYVGDSIITAVATYQGLWMSCAFQSTGQLQCKIYDSILQLDSDLQATR. Residues 82 to 102 traverse the membrane as a helical segment; sequence ALMIVGIIVSIAGLGVASIGM. At 103-119 the chain is on the cytoplasmic side; that stretch reads KCTTCGADDKVRKTRTA. A helical membrane pass occupies residues 120 to 140; that stretch reads MTGGIILLVGALCAVVACSWF. Residues 141-162 lie on the Extracellular side of the membrane; the sequence is AHNVIRAFYNPFTPVNTKFEFG. Residues 163-183 form a helical membrane-spanning segment; it reads AAIFIAWGGSFLDVLGGAMLA. Residues 184-212 are Cytoplasmic-facing; sequence ASCPRSKQVSKYPKSNSTRSANGSNKEYV. Residues 191–212 form a disordered region; it reads QVSKYPKSNSTRSANGSNKEYV.

This sequence belongs to the claudin family.

It localises to the cell junction. The protein resides in the tight junction. Its subcellular location is the cell membrane. Functionally, plays a major role in tight junction-specific obliteration of the intercellular space. The chain is Claudin-7-A from Danio rerio (Zebrafish).